The sequence spans 165 residues: NADH-quinone oxidoreductase subunit I (165 aa).

2 4Fe-4S ferredoxin-type domains span residues 57–86 and 96–125; these read RRYE…IESD and SRYD…ETHI. 8 residues coordinate [4Fe-4S] cluster: Cys-66, Cys-69, Cys-72, Cys-76, Cys-105, Cys-108, Cys-111, and Cys-115.

The protein belongs to the complex I 23 kDa subunit family. In terms of assembly, NDH-1 is composed of 14 different subunits. Subunits NuoA, H, J, K, L, M, N constitute the membrane sector of the complex. The cofactor is [4Fe-4S] cluster.

Its subcellular location is the cell inner membrane. It carries out the reaction a quinone + NADH + 5 H(+)(in) = a quinol + NAD(+) + 4 H(+)(out). Its function is as follows. NDH-1 shuttles electrons from NADH, via FMN and iron-sulfur (Fe-S) centers, to quinones in the respiratory chain. The immediate electron acceptor for the enzyme in this species is believed to be ubiquinone. Couples the redox reaction to proton translocation (for every two electrons transferred, four hydrogen ions are translocated across the cytoplasmic membrane), and thus conserves the redox energy in a proton gradient. This Polaromonas naphthalenivorans (strain CJ2) protein is NADH-quinone oxidoreductase subunit I.